The sequence spans 290 residues: dATP/dGTP diphosphohydrolase (290 aa).

Positions 103 to 141 (VPGVREQRGSVQPVPDSEEGLDMQPVPAPSPSRSKKRAY) are disordered. The C2H2-type zinc-finger motif lies at 262–285 (HLCVVCGQRFGSEDDRASHYTTTH).

This sequence belongs to the Caudovirales dATP/dGTP diphosphohydrolase family. It depends on Co(2+) as a cofactor.

It carries out the reaction dGTP + H2O = dGMP + diphosphate + H(+). The catalysed reaction is dATP + H2O = dAMP + diphosphate + H(+). It participates in purine metabolism. Catalyzes the hydrolysis of dGTP into dGMP, which is needed among other for the first step of biosynthesis of dZTP (2-amino-2'-deoxyadenosine-5'-triphosphate). This is dATP/dGTP diphosphohydrolase from Salmonella phage PMBT28.